Here is a 446-residue protein sequence, read N- to C-terminus: Plant intracellular Ras-group-related LRR protein 3 (446 aa).

The stretch at 65–100 forms a coiled coil; it reads EACRAVVRLEETHDAYEALLQEAEGRLEAVYRSAME. The interval 101–121 is disordered; sequence GKDLEEPDGRDESAAAAAGDD. LRR repeat units lie at residues 138 to 160, 161 to 184, 185 to 207, 208 to 230, 232 to 254, 255 to 277, 279 to 300, 301 to 324, 325 to 347, and 349 to 371; these read GKPV…AFGR, IQGL…IGGL, DHLE…IGLL, LNLR…ISKC, SLIE…GYEL, VNLR…ICEM, SLYL…IGKL, SSLE…SFGD, LLNL…NFGR, and DKLE…IVNK. A GVYW motif is present at residues 372 to 384; that stretch reads GVDAVKEYMLQRW.

It belongs to the SHOC2 family. Widely expressed.

Functionally, leucine-rich repeat protein that likely mediates protein interactions, possibly in the context of signal transduction. The polypeptide is Plant intracellular Ras-group-related LRR protein 3 (IRL3) (Oryza sativa subsp. japonica (Rice)).